A 758-amino-acid polypeptide reads, in one-letter code: 1-phosphatidylinositol 4,5-bisphosphate phosphodiesterase delta-4 (758 aa).

A PH domain is found at 16-124 (QLMQAGSPMR…WIQGLEKLIE (109 aa)). The interval 26 to 53 (KVKSRSWKKQRYFKLQEDCMTIWYNSKK) is substrate binding. EF-hand domains are found at residues 134–169 (LMDQ…MNVD), 170–205 (MSEH…LTQR), and 206–237 (DEVL…GQLE). Ca(2+) contacts are provided by aspartate 147, asparagine 149, aspartate 151, arginine 153, glutamate 158, aspartate 183, serine 185, serine 187, threonine 189, and glutamate 194. Positions 213–243 (QDFSKDGKKLTLLEFVDFLQQGQLEEENTEE) match the GBA motif. The PI-PLC X-box domain maps to 290–435 (QDMMQPLCHY…LRGKILLKGK (146 aa)). The active site involves histidine 305. Asparagine 306, glutamate 335, and aspartate 337 together coordinate Ca(2+). Histidine 350 is a catalytic residue. A Ca(2+)-binding site is contributed by glutamate 384. 2 residues coordinate substrate: lysine 433 and lysine 435. Acidic residues predominate over residues 446-468 (EQPDDSLGEVSDEEENIEVEEER). The disordered stretch occupies residues 446–479 (EQPDDSLGEVSDEEENIEVEEERNEDKKRAKKSK). A PI-PLC Y-box domain is found at 486-602 (LSDCVIYCKS…GYVLKPSFMR (117 aa)). Substrate contacts are provided by serine 515 and arginine 542. Residues 602–731 (RHVETTFNPD…SGYRHIHLLS (130 aa)) enclose the C2 domain. Ca(2+) is bound by residues isoleucine 645, aspartate 647, asparagine 671, aspartate 700, tyrosine 701, and aspartate 702. A PDZ-binding motif is present at residues 726 to 729 (HIHL).

Requires Ca(2+) as cofactor.

It localises to the membrane. The protein resides in the nucleus. Its subcellular location is the cytoplasm. The protein localises to the endoplasmic reticulum. It catalyses the reaction a 1,2-diacyl-sn-glycero-3-phospho-(1D-myo-inositol-4,5-bisphosphate) + H2O = 1D-myo-inositol 1,4,5-trisphosphate + a 1,2-diacyl-sn-glycerol + H(+). It carries out the reaction a 1,2-diacyl-sn-glycero-3-phospho-(1D-myo-inositol) + H2O = 1D-myo-inositol 1-phosphate + a 1,2-diacyl-sn-glycerol + H(+). Hydrolyzes the phosphatidylinositol 4,5-bisphosphate (PIP2) to generate 2 second messenger molecules diacylglycerol (DAG) and inositol 1,4,5-trisphosphate (IP3). DAG mediates the activation of protein kinase C (PKC), while IP3 releases Ca(2+) from intracellular stores. This chain is 1-phosphatidylinositol 4,5-bisphosphate phosphodiesterase delta-4 (plcd4), found in Xenopus laevis (African clawed frog).